A 249-amino-acid chain; its full sequence is Putative NAD(+)--arginine ADP-ribosyltransferase Vis (249 aa).

A signal peptide spans 1 to 18; sequence MNTRFLLLLCCLSFTTFS. Residues 31–223 enclose the TR mART core domain; it reads EEEVTQLAED…IGVETVKASA (193 aa). NAD(+) contacts are provided by residues 68–80, 117–120, and Glu137; these read SISGYQTANDYLR and RGTW. The active site involves Arg117. Catalysis depends on residues Ser142 and Glu191. Glu191 serves as a coordination point for NAD(+).

Belongs to the Arg-specific ADP-ribosyltransferase family.

It localises to the secreted. It catalyses the reaction L-arginyl-[protein] + NAD(+) = N(omega)-(ADP-D-ribosyl)-L-arginyl-[protein] + nicotinamide + H(+). In terms of biological role, a probable mono(ADP-ribosyl)transferase, it may ADP-ribosylate Arg in target protein(s). Upon expression in yeast cells causes cell death. In Vibrio splendidus (strain 12B01), this protein is Putative NAD(+)--arginine ADP-ribosyltransferase Vis.